The primary structure comprises 465 residues: D(1C) dopamine receptor (465 aa).

Over Met1–Leu30 the chain is Extracellular. N-linked (GlcNAc...) asparagine glycosylation is found at Asn3 and Asn8. A helical membrane pass occupies residues Thr31–Ile54. Over Lys55–Asn65 the chain is Cytoplasmic. The chain crosses the membrane as a helical span at residues Phe66–Ala92. The Extracellular segment spans residues Gly93–Cys101. Cys101 and Cys187 are oxidised to a cystine. Residues Asp102–Leu124 form a helical membrane-spanning segment. Residues Asp125 to Arg143 lie on the Cytoplasmic side of the membrane. A helical transmembrane segment spans residues Val144–Trp168. The Extracellular segment spans residues His169 to Arg193. A helical membrane pass occupies residues Thr194–Tyr219. The Cytoplasmic portion of the chain corresponds to Arg220–Lys264. Residues Thr265 to His291 traverse the membrane as a helical segment. Over Met292–Thr309 the chain is Extracellular. Residues Phe310–Phe334 traverse the membrane as a helical segment. Topologically, residues Arg335–Tyr465 are cytoplasmic. Cys344 carries S-palmitoyl cysteine lipidation.

This sequence belongs to the G-protein coupled receptor 1 family. As to expression, brain and kidney.

The protein localises to the cell membrane. It localises to the cell projection. The protein resides in the cilium membrane. Functionally, this is one of the five types (D1 to D5) of receptors for dopamine. The activity of this receptor is mediated by G proteins which activate adenylyl cyclase. This chain is D(1C) dopamine receptor (drd1c), found in Xenopus laevis (African clawed frog).